Consider the following 445-residue polypeptide: Argininosuccinate lyase (445 aa).

It belongs to the lyase 1 family. Argininosuccinate lyase subfamily.

The protein localises to the cytoplasm. It catalyses the reaction 2-(N(omega)-L-arginino)succinate = fumarate + L-arginine. It participates in amino-acid biosynthesis; L-arginine biosynthesis; L-arginine from L-ornithine and carbamoyl phosphate: step 3/3. The chain is Argininosuccinate lyase from Xylella fastidiosa (strain 9a5c).